The following is a 415-amino-acid chain: Serine hydroxymethyltransferase (415 aa).

(6S)-5,6,7,8-tetrahydrofolate is bound by residues leucine 117 and 121–123; that span reads GHL. Lysine 226 is modified (N6-(pyridoxal phosphate)lysine). (6S)-5,6,7,8-tetrahydrofolate is bound at residue glutamate 241.

The protein belongs to the SHMT family. In terms of assembly, homodimer. Pyridoxal 5'-phosphate is required as a cofactor.

The protein resides in the cytoplasm. It catalyses the reaction (6R)-5,10-methylene-5,6,7,8-tetrahydrofolate + glycine + H2O = (6S)-5,6,7,8-tetrahydrofolate + L-serine. The protein operates within one-carbon metabolism; tetrahydrofolate interconversion. It functions in the pathway amino-acid biosynthesis; glycine biosynthesis; glycine from L-serine: step 1/1. Functionally, catalyzes the reversible interconversion of serine and glycine with tetrahydrofolate (THF) serving as the one-carbon carrier. This reaction serves as the major source of one-carbon groups required for the biosynthesis of purines, thymidylate, methionine, and other important biomolecules. Also exhibits THF-independent aldolase activity toward beta-hydroxyamino acids, producing glycine and aldehydes, via a retro-aldol mechanism. In Bacillus velezensis (strain DSM 23117 / BGSC 10A6 / LMG 26770 / FZB42) (Bacillus amyloliquefaciens subsp. plantarum), this protein is Serine hydroxymethyltransferase.